We begin with the raw amino-acid sequence, 894 residues long: Leucine--tRNA ligase, mitochondrial (894 aa).

A mitochondrion-targeting transit peptide spans 1–9 (MLPRPSSRF). Residues 56–66 (PYPSGVLHIGH) carry the 'HIGH' region motif. The short motif at 646 to 650 (KMSKS) is the 'KMSKS' region element. ATP is bound at residue K649.

This sequence belongs to the class-I aminoacyl-tRNA synthetase family.

The protein resides in the mitochondrion matrix. It catalyses the reaction tRNA(Leu) + L-leucine + ATP = L-leucyl-tRNA(Leu) + AMP + diphosphate. This Saccharomyces paradoxus (Yeast) protein is Leucine--tRNA ligase, mitochondrial (NAM2).